A 290-amino-acid chain; its full sequence is Manganese efflux system protein MneS (290 aa).

6 helical membrane-spanning segments follow: residues 15-35 (LVSI…GYLF), 39-61 (ALTA…LIGL), 82-102 (IASL…LFSA), 113-133 (TPDM…LIVY), 159-179 (AFVS…LAWI), and 181-201 (TVTA…IFKE).

This sequence belongs to the cation diffusion facilitator (CDF) transporter (TC 2.A.4) family.

The protein localises to the cell membrane. Its function is as follows. Secondary manganese efflux system. May prevent manganese intoxication. This chain is Manganese efflux system protein MneS, found in Bacillus subtilis (strain 168).